Consider the following 168-residue polypeptide: UPF0303 protein YE1367 (168 aa).

Belongs to the UPF0303 family.

In Yersinia enterocolitica serotype O:8 / biotype 1B (strain NCTC 13174 / 8081), this protein is UPF0303 protein YE1367.